Here is a 994-residue protein sequence, read N- to C-terminus: ASI1-immunoprecipitated protein 2 (994 aa).

Disordered stretches follow at residues 39 to 182 (AEFS…SGEN) and 187 to 206 (KADESNTSAMSDSESENDPE). Residues 45 to 54 (KSDESSDENS) show a composition bias toward basic and acidic residues. The segment covering 60-102 (SQCSFNGDNLLRSSGVNAPGSSHNTSSEASHLVNSNHDTSSEN) has biased composition (polar residues). Basic and acidic residues-rich tracts occupy residues 119-140 (LLDRPHKDQDSMKVDSCNDHQA) and 148-163 (KVKEKSGAKNNEEKKN). The segment at 212 to 263 (VKVCDTCGDAGREDLLAICSRCSDGAEHTYCMRVMLKKVPKGYWLCEECKFA) adopts a PHD-type zinc-finger fold. Residues Cys215, Cys218, Cys230, Cys233, His239, Cys242, Cys257, and Cys260 each coordinate Zn(2+). 2 disordered regions span residues 342–567 (AHYS…NNKG) and 839–875 (CSNPPKNTPLPASCVSPNRDTFRHENPSNKKSLTDRT). Over residues 371–384 (SFLKSNSFNSLSSR) the composition is skewed to low complexity. Composition is skewed to polar residues over residues 417–435 (VGKSMSSRCIDVGSSNCND) and 449–464 (TEANPSASISRGNSSI). Composition is skewed to basic and acidic residues over residues 469–478 (SPRDLKDLQS), 536–552 (PRSREFREAGEKTKDAV), and 858–875 (DTFRHENPSNKKSLTDRT).

As to quaternary structure, component of the ASI1-AIPP1-EDM2 (AAE) RNA regulatory complex composed of at least AIPP1/EDM3, ASI1 and EDM2 and may contain CPL2, AIPP2 and AIPP3/BDT1. Part of the BAH-PHD bivalent histone reader complex that contains AIPP2, PAIPP2 and AIPP3/BDT1; the BAH-PHD module associates with CPL2 to form the BAH-PHD-CPL2 complex (BPC) for transcriptional repression. Binds directly to ASI1, AIPP3/BDT1 and CPL2 but not to PAIPP2. As to expression, expressed ubiquitously.

Together with AIPP3/BDT1 and PAIPP2, cooperates to form a BAH-PHD bivalent histone reader complex able to read histone H3 lysine 27 trimethylation (H3K27me3) and low-methylated H3K4 histone marks in order to regulate transcription, especially to prevent early flowering; promotes AIPP3/BDT1 binding to H3K27me3. CPL2 is subsequently recruited to form a BAH-PHD-CPL2 complex (BPC) in order to silence several H3K27me3 and low-methylated H3K4 enriched loci, including AGO5, via the phosphorylation state-dependent inhibition of Pol II release from the transcriptional start site (e.g. Ser5P-Pol II dephosphorylation). The BPC complex represses flowering by inhibiting the expression of several genes, including AGL6, FT, FUL and SOC1. Prevents the accumulation of intronic heterochromatin-containing genes (e.g. IBM1, At3g05410 and RPP7). This chain is ASI1-immunoprecipitated protein 2, found in Arabidopsis thaliana (Mouse-ear cress).